The sequence spans 432 residues: Trigger factor (432 aa).

The PPIase FKBP-type domain maps to 161–246; it reads GTRATINFVG…VVKVEARELP (86 aa).

Belongs to the FKBP-type PPIase family. Tig subfamily.

It is found in the cytoplasm. The catalysed reaction is [protein]-peptidylproline (omega=180) = [protein]-peptidylproline (omega=0). Its function is as follows. Involved in protein export. Acts as a chaperone by maintaining the newly synthesized protein in an open conformation. Functions as a peptidyl-prolyl cis-trans isomerase. In Aliivibrio fischeri (strain MJ11) (Vibrio fischeri), this protein is Trigger factor.